Consider the following 492-residue polypeptide: Putative sucrose transport protein SUC6 (492 aa).

The tract at residues 1-26 is disordered; it reads MSDLQANKDAAAVNRQSSSSSADLNG. Over 1–33 the chain is Cytoplasmic; it reads MSDLQANKDAAAVNRQSSSSSADLNGPSPMRKM. Residues 14–23 show a composition bias toward polar residues; it reads NRQSSSSSAD. Serine 17 is modified (phosphoserine). The helical transmembrane segment at 34-54 threads the bilayer; it reads ISVASIAAGIQFGWALQLSLL. The Extracellular segment spans residues 55 to 68; the sequence is TPYVQLLGVPHKWS. A helical transmembrane segment spans residues 69–89; the sequence is SFIWLCGPVSGLLVQPSVGYF. At 90-101 the chain is on the cytoplasmic side; sequence SDRCKSRFGRRR. Residues 102–122 traverse the membrane as a helical segment; the sequence is PFIAMGALLVAVAVVLIGYAA. Topologically, residues 123–139 are extracellular; it reads DFGHSMGDKVDEPVKMR. The helical transmembrane segment at 140-160 threads the bilayer; the sequence is AVVIFALGFWILDVANNTLQG. Residues 161–181 are Cytoplasmic-facing; it reads PCRAFLGDLAAGDAKKTRTAN. The helical transmembrane segment at 182 to 202 threads the bilayer; sequence AFFSFFMAVGNVLGYAAGSYT. The Extracellular portion of the chain corresponds to 203-224; the sequence is NLYKIFPFTMTKACDIYCANLK. The chain crosses the membrane as a helical span at residues 225 to 245; sequence SCFFLSITLLLVVTIIALWYV. At 246–277 the chain is on the cytoplasmic side; sequence EDKQWSPKADSDNEKTPFFGEIFGAFKVMKRP. Residues 278–298 traverse the membrane as a helical segment; the sequence is MWMLLIVTALNWIAWFPFLLY. The Extracellular segment spans residues 299-324; the sequence is DTDWMGREVYGGDSKGDDKMKKLYNQ. The chain crosses the membrane as a helical span at residues 325–345; that stretch reads GIHVGGLGLMLNSIVLGFMSL. Topologically, residues 346 to 359 are cytoplasmic; sequence GIEGISRKMGGAKR. A helical membrane pass occupies residues 360–380; the sequence is LWGAVNIILAVCLAMTVLVTK. The Extracellular portion of the chain corresponds to 381–403; it reads KAEEHRRIAGPMALPTDGIRAGA. Residues 404 to 424 traverse the membrane as a helical segment; sequence LTLFALLGIPLAITFSIPFAL. The Cytoplasmic segment spans residues 425–446; sequence ASIISSSSGAGQGLSLGVLNMT. Residues 447–467 traverse the membrane as a helical segment; the sequence is IVIPQMVVSFGVGPIDALFGG. Residues 468–469 are Extracellular-facing; that stretch reads GN. A helical transmembrane segment spans residues 470 to 490; the sequence is LPGFVVGAIAAAISSVVAFSV. The Cytoplasmic segment spans residues 491–492; the sequence is LP.

Belongs to the glycoside-pentoside-hexuronide (GPH) cation symporter transporter (TC 2.A.2.4) family.

It localises to the cell membrane. Its pathway is glycan biosynthesis; sucrose metabolism. May be responsible for the transport of glucosides into the cell, with the concomitant uptake of protons (symport system). Does not seem to transport sucrose. The protein is Putative sucrose transport protein SUC6 of Arabidopsis thaliana (Mouse-ear cress).